Consider the following 383-residue polypeptide: Acyl-CoA dehydrogenase, short-chain specific (383 aa).

Residue Glu-367 is the Proton acceptor of the active site.

Belongs to the acyl-CoA dehydrogenase family. As to quaternary structure, homotetramer. FAD is required as a cofactor.

The catalysed reaction is butanoyl-CoA + oxidized [electron-transfer flavoprotein] + H(+) = (2E)-butenoyl-CoA + reduced [electron-transfer flavoprotein]. The enzyme catalyses a short-chain 2,3-saturated fatty acyl-CoA + oxidized [electron-transfer flavoprotein] + H(+) = a short-chain (2E)-enoyl-CoA + reduced [electron-transfer flavoprotein]. Functionally, has an optimum specificity for 4-carbon length fatty acyl-CoAs. The protein is Acyl-CoA dehydrogenase, short-chain specific of Megasphaera elsdenii.